The following is a 236-amino-acid chain: uncharacterized protein (236 aa).

Residues M1–K17 are compositionally biased toward polar residues. The tract at residues M1–I94 is disordered. Positions S18–L35 are enriched in low complexity. The Collagen-like domain maps to G58–G91.

The protein belongs to the sputnik virus V6 family.

This is an uncharacterized protein from Sputnik virophage.